The following is a 486-amino-acid chain: N-succinylglutamate 5-semialdehyde dehydrogenase (486 aa).

NAD(+) is bound at residue 220–225 (GSSRTG). Catalysis depends on residues Glu243 and Cys277.

This sequence belongs to the aldehyde dehydrogenase family. AstD subfamily.

The enzyme catalyses N-succinyl-L-glutamate 5-semialdehyde + NAD(+) + H2O = N-succinyl-L-glutamate + NADH + 2 H(+). Its pathway is amino-acid degradation; L-arginine degradation via AST pathway; L-glutamate and succinate from L-arginine: step 4/5. Catalyzes the NAD-dependent reduction of succinylglutamate semialdehyde into succinylglutamate. This Shewanella piezotolerans (strain WP3 / JCM 13877) protein is N-succinylglutamate 5-semialdehyde dehydrogenase.